The sequence spans 200 residues: Holliday junction branch migration complex subunit RuvA (200 aa).

The domain I stretch occupies residues 1-64 (MYAYFRGELI…EDLMQLYGFI (64 aa)). The interval 65 to 143 (EEEERQLFLL…KLQQTRPGKT (79 aa)) is domain II. The tract at residues 144 to 154 (AGAGSVASLSE) is flexible linker. The interval 154–200 (EDALQALMTLGFSRASAQQAVTRALLSAENPGVEDIVREALQNIRNH) is domain III.

Belongs to the RuvA family. Homotetramer. Forms an RuvA(8)-RuvB(12)-Holliday junction (HJ) complex. HJ DNA is sandwiched between 2 RuvA tetramers; dsDNA enters through RuvA and exits via RuvB. An RuvB hexamer assembles on each DNA strand where it exits the tetramer. Each RuvB hexamer is contacted by two RuvA subunits (via domain III) on 2 adjacent RuvB subunits; this complex drives branch migration. In the full resolvosome a probable DNA-RuvA(4)-RuvB(12)-RuvC(2) complex forms which resolves the HJ.

Its subcellular location is the cytoplasm. The RuvA-RuvB-RuvC complex processes Holliday junction (HJ) DNA during genetic recombination and DNA repair, while the RuvA-RuvB complex plays an important role in the rescue of blocked DNA replication forks via replication fork reversal (RFR). RuvA specifically binds to HJ cruciform DNA, conferring on it an open structure. The RuvB hexamer acts as an ATP-dependent pump, pulling dsDNA into and through the RuvAB complex. HJ branch migration allows RuvC to scan DNA until it finds its consensus sequence, where it cleaves and resolves the cruciform DNA. In Prosthecochloris aestuarii (strain DSM 271 / SK 413), this protein is Holliday junction branch migration complex subunit RuvA.